The chain runs to 558 residues: Outer membrane transporter CdiB (558 aa).

The first 25 residues, 1 to 25, serve as a signal peptide directing secretion; the sequence is MFVSSRKTGLIVCFSLIGYTASAFS. Residues 34–62 adopt a coiled-coil conformation; sequence NETQQRQSEVIEQSRQQREALQQLNNIVQ. Residues 76 to 151 enclose the POTRA domain; the sequence is FTLREIRFNH…GVLQLEILEG (76 aa).

The protein belongs to the TPS (TC 1.B.20) family.

It is found in the cell outer membrane. In terms of biological role, probable outer membrane protein component of a toxin-immunity protein module, which functions as a cellular contact-dependent growth inhibition (CDI) system. CDI modules allow bacteria to communicate with and inhibit the growth of closely related neighboring bacteria in a contact-dependent fashion. This protein may be required for secretion and assembly of the CdiA toxin. Probable member of a two partner secretion pathway (TPS) in which it mediates the secretion of CdiA. This is Outer membrane transporter CdiB (cdiB) from Dickeya dadantii (strain 3937) (Erwinia chrysanthemi (strain 3937)).